A 230-amino-acid polypeptide reads, in one-letter code: MQGLTERQQQVLHYIRQSISERGYPPTLREIGAHMGIRSTNGVNDHLRALERKGYLTREDMKSRALRPRDLDGAGAGGGADLRGALVNGGNDAPANDQEDDLVEIAVVGRIAAGLPILAEEHVLDTVRIERTLVRGGREVFGLRVTGDSMIEAGIFSGDYIFVRRQLTAQRGDIVVALIGDEATVKYFFPEKDYVRFQPANAAMAPILVRASDFKPAMLLGVVVGVYRKL.

A DNA-binding region (H-T-H motif) is located at residues 28–48 (LREIGAHMGIRSTNGVNDHLR). Residues Ser-149 and Lys-186 each act as for autocatalytic cleavage activity in the active site.

Belongs to the peptidase S24 family. As to quaternary structure, homodimer.

The catalysed reaction is Hydrolysis of Ala-|-Gly bond in repressor LexA.. Functionally, represses a number of genes involved in the response to DNA damage (SOS response), including recA and lexA. In the presence of single-stranded DNA, RecA interacts with LexA causing an autocatalytic cleavage which disrupts the DNA-binding part of LexA, leading to derepression of the SOS regulon and eventually DNA repair. In Sorangium cellulosum (strain So ce56) (Polyangium cellulosum (strain So ce56)), this protein is LexA repressor.